A 234-amino-acid polypeptide reads, in one-letter code: Inner membrane protein YbhL (234 aa).

Topologically, residues 1–23 (MDRFPRSDSIVQPRAGLQTYMAQ) are periplasmic. The chain crosses the membrane as a helical span at residues 24–44 (VYGWMTVGLLLTAFVAWYAAN). At 45 to 56 (SAAVMELLFTNR) the chain is on the cytoplasmic side. A helical transmembrane segment spans residues 57–77 (VFLIGLIIAQLALVIVLSAMI). Over 78–79 (QK) the chain is Periplasmic. Residues 80–100 (LSAGVTTMLFMLYSALTGLTL) traverse the membrane as a helical segment. The Cytoplasmic segment spans residues 101 to 102 (SS). A helical membrane pass occupies residues 103–123 (IFIVYTAASIASTFVVTAGMF). Residues 124 to 136 (GAMSLYGYTTKRD) lie on the Periplasmic side of the membrane. Residues 137–157 (LSGFGNMLFMALIGIVLASLV) traverse the membrane as a helical segment. Topologically, residues 158-163 (NFWLKS) are cytoplasmic. The helical transmembrane segment at 164 to 184 (EALMWAVTYIGVIVFVGLTAY) threads the bilayer. Topologically, residues 185–206 (DTQKLKNMGEQIDTRDTSNLRK) are periplasmic. The chain crosses the membrane as a helical span at residues 207–227 (YSILGALTLYLDFINLFLMLL). Over 228–234 (RIFGNRR) the chain is Cytoplasmic.

It belongs to the BI1 family.

It is found in the cell inner membrane. The chain is Inner membrane protein YbhL (ybhL) from Escherichia coli (strain K12).